A 110-amino-acid chain; its full sequence is Snake venom vascular endothelial growth factor toxin ICPP (110 aa).

At Q1 the chain carries Pyrrolidone carboxylic acid. 3 disulfides stabilise this stretch: C14–C56, C45–C91, and C49–C93.

As to quaternary structure, homodimer; disulfide-linked. Interacts with high affinity with KDR/VEGFR-2, and with a lower affinity with neuropilin-1 (NRP1) and neuropilin-2 (NRP2). In terms of tissue distribution, expressed by the venom gland.

Its subcellular location is the secreted. Its function is as follows. Snake venom VEGFs may contribute to venom dispersion and prey subjugation by inducing vascular permeability and hypotension. This protein increases vascular permeability and angiogenesis probably through VEGF receptor (KDR/VEGFR-2) signaling. Induces DNA synthesis in human umbilical vein endothelial cells, and promotes mouse embryonic stem cell proliferation and differentiation. It may also induce a drastic hypotensive effect after intravenous injection. The hypotension is mediated by nitric oxide (NO), which is produced by VEGF-activated endothelium NO synthase. The chain is Snake venom vascular endothelial growth factor toxin ICPP from Macrovipera lebetinus (Levantine viper).